A 367-amino-acid polypeptide reads, in one-letter code: 15-cis-zeta-carotene isomerase, chloroplastic (367 aa).

Residues 1–58 (MAVYHLLLSSPPSLLLLPPSPRRPNLTLIRRIPAHPRLGNSTSLLSSSSPVIRKILVR) constitute a chloroplast transit peptide. Helical transmembrane passes span 95-115 (SWVY…VVWI), 137-157 (EVAM…LASL), 172-192 (VLFA…FINH), 211-231 (AIWV…FNLL), 269-289 (LWIG…HHLF), and 339-359 (LPYL…PLMQ).

In terms of tissue distribution, expressed in leaves and at lower levels in roots.

It localises to the plastid. The protein localises to the chloroplast membrane. The enzyme catalyses 9,9',15-tri-cis-zeta-carotene = 9,9'-di-cis-zeta-carotene. In terms of biological role, isomerase involved in the biosynthesis of carotenoids. Catalyzes the cis- to trans-conversion of the 15-cis-bond in 9,15,9'-tri-cis-zeta-carotene. The sequence is that of 15-cis-zeta-carotene isomerase, chloroplastic (Z-ISO) from Arabidopsis thaliana (Mouse-ear cress).